Reading from the N-terminus, the 92-residue chain is MALAEKFNLQDRFLNHLRVNKIEVKVYLVNGFQTKGFIRSFDSYTVLLESGNQQSLIYKHAISTIIPSSYVMLMPKKQETAQEAETSENEGS.

The Sm domain occupies 11–71; that stretch reads DRFLNHLRVN…ISTIIPSSYV (61 aa).

This sequence belongs to the Hfq family. In terms of assembly, homohexamer.

Functionally, RNA chaperone that binds small regulatory RNA (sRNAs) and mRNAs to facilitate mRNA translational regulation in response to envelope stress, environmental stress and changes in metabolite concentrations. Also binds with high specificity to tRNAs. This chain is RNA-binding protein Hfq, found in Thermotoga maritima (strain ATCC 43589 / DSM 3109 / JCM 10099 / NBRC 100826 / MSB8).